Consider the following 381-residue polypeptide: Succinyl-diaminopimelate desuccinylase (381 aa).

Zn(2+) is bound at residue His68. Asp70 is a catalytic residue. Asp101 provides a ligand contact to Zn(2+). The active-site Proton acceptor is Glu135. 3 residues coordinate Zn(2+): Glu136, Glu164, and His350.

This sequence belongs to the peptidase M20A family. DapE subfamily. In terms of assembly, homodimer. Requires Zn(2+) as cofactor. Co(2+) is required as a cofactor.

The catalysed reaction is N-succinyl-(2S,6S)-2,6-diaminopimelate + H2O = (2S,6S)-2,6-diaminopimelate + succinate. It functions in the pathway amino-acid biosynthesis; L-lysine biosynthesis via DAP pathway; LL-2,6-diaminopimelate from (S)-tetrahydrodipicolinate (succinylase route): step 3/3. In terms of biological role, catalyzes the hydrolysis of N-succinyl-L,L-diaminopimelic acid (SDAP), forming succinate and LL-2,6-diaminopimelate (DAP), an intermediate involved in the bacterial biosynthesis of lysine and meso-diaminopimelic acid, an essential component of bacterial cell walls. This chain is Succinyl-diaminopimelate desuccinylase, found in Neisseria meningitidis serogroup C / serotype 2a (strain ATCC 700532 / DSM 15464 / FAM18).